The following is a 294-amino-acid chain: MSSELSETEKRKLIRERRQKKFSNGGASARLNRITGQAENSQLDTESPLDSKSSRETTPTVTKVDSNTEEMDELLENIATSPSNKVEKSQKKKEQATSPQETIDPELEIFKQLAENQQNDVSTPDLFSMLRSMKDNMAKSAATDTNPPLEPVDQQLLDYNNYLINNLKVWSIIFKWCFFLIPYLFALTRSEPISFLPEQFSNPSNFFMIFLSFEIVATSIYFQKLQNIEKSNKINGFQSNNKIVNLVSLIPEGVLPVPDIKGKVIMALQYWDVFSMFLTDICFVLVMMGLFKLI.

Positions 1–104 (MSSELSETEK…QATSPQETID (104 aa)) are disordered. Residues 1–166 (MSSELSETEK…LDYNNYLINN (166 aa)) lie on the Cytoplasmic side of the membrane. Residues 12–21 (KLIRERRQKK) show a composition bias toward basic residues. The segment covering 34–65 (ITGQAENSQLDTESPLDSKSSRETTPTVTKVD) has biased composition (polar residues). The span at 85 to 95 (KVEKSQKKKEQ) shows a compositional bias: basic and acidic residues. The chain crosses the membrane as a helical span at residues 167-187 (LKVWSIIFKWCFFLIPYLFAL). At 188-205 (TRSEPISFLPEQFSNPSN) the chain is on the lumenal side. A helical membrane pass occupies residues 206–225 (FFMIFLSFEIVATSIYFQKL). Residues 226–272 (QNIEKSNKINGFQSNNKIVNLVSLIPEGVLPVPDIKGKVIMALQYWD) are Cytoplasmic-facing. A helical membrane pass occupies residues 273–293 (VFSMFLTDICFVLVMMGLFKL). Position 294 (isoleucine 294) is a topological domain, lumenal.

It belongs to the GET2 family. Component of the Golgi to ER traffic (GET) complex, which is composed of GET1, GET2 and GET3. Within the complex, GET1 and GET2 form a heterotetramer which is stabilized by phosphatidylinositol binding and which binds to the GET3 homodimer.

It is found in the endoplasmic reticulum membrane. It localises to the golgi apparatus membrane. Its function is as follows. Required for the post-translational delivery of tail-anchored (TA) proteins to the endoplasmic reticulum. Together with GET1, acts as a membrane receptor for soluble GET3, which recognizes and selectively binds the transmembrane domain of TA proteins in the cytosol. The GET complex cooperates with the HDEL receptor ERD2 to mediate the ATP-dependent retrieval of resident ER proteins that contain a C-terminal H-D-E-L retention signal from the Golgi to the ER. The sequence is that of Golgi to ER traffic protein 2 from Vanderwaltozyma polyspora (strain ATCC 22028 / DSM 70294 / BCRC 21397 / CBS 2163 / NBRC 10782 / NRRL Y-8283 / UCD 57-17) (Kluyveromyces polysporus).